We begin with the raw amino-acid sequence, 97 residues long: Antitoxin TacA2 (97 aa).

It belongs to the TacA antitoxin family. In terms of assembly, homodimer. Forms a complex with cognate toxin TacT2.

In terms of biological role, antitoxin component of a type II toxin-antitoxin (TA) system. Counteracts the toxic effect of cognate toxin TacT2. The TacA2-TacT2 complex both represses and derepresses expression of its own operon. This is Antitoxin TacA2 from Salmonella enteritidis.